The sequence spans 420 residues: POU domain, class 4, transcription factor 1 (420 aa).

Positions 57–66 match the POU-IV box motif; the sequence is RAEALAAVDI. 2 disordered regions span residues 94–117 and 132–200; these read STVP…GDLL and GGAG…XGHL. Basic residues predominate over residues 99–108; sequence AHHHHHHHHH. Gly residues-rich tracts occupy residues 132-165 and 172-184; these read GGAG…GPGV and PGGG…GGLL. Positions 261 to 338 constitute a POU-specific domain; that stretch reads DSDTDPRELE…ILQAWLEEAE (78 aa). The homeobox DNA-binding region spans 356–415; the sequence is KKRKRTSIAAPEKRSLEAYFAVQPRPSSEKIAAIAEKLDLKKNVVRVWFCNQRQKQKRMK.

The protein belongs to the POU transcription factor family. Class-4 subfamily. In terms of assembly, interacts (via N-terminus) with RIT2; the interaction controls POU4F1 transactivation activity on some neuronal target genes. Isoform 1 interacts with POU4F2; this interaction inhibits both POU4F1 DNA-binding and transcriptional activities. Isoform 1 interacts (C-terminus) with ESR1 (via DNA-binding domain); this interaction decreases the estrogen receptor ESR1 transcriptional activity in a DNA- and ligand 17-beta-estradiol-independent manner. Detected in brain, spinal cord and dorsal root ganglion. Isoform 2 is detected in brain, spinal cord, dorsal root ganglion and spleen.

It is found in the nucleus. Its subcellular location is the cytoplasm. Multifunctional transcription factor with different regions mediating its different effects. Acts by binding (via its C-terminal domain) to sequences related to the consensus octamer motif 5'-ATGCAAAT-3' in the regulatory regions of its target genes. Regulates the expression of specific genes involved in differentiation and survival within a subset of neuronal lineages. It has been shown that activation of some of these genes requires its N-terminal domain, maybe through a neuronal-specific cofactor. Activates BCL2 expression and protects neuronal cells from apoptosis (via the N-terminal domain). Induces neuronal process outgrowth and the coordinate expression of genes encoding synaptic proteins. Exerts its major developmental effects in somatosensory neurons and in brainstem nuclei involved in motor control. Stimulates the binding affinity of the nuclear estrogene receptor ESR1 to DNA estrogen response element (ERE), and hence modulates ESR1-induced transcriptional activity. May positively regulate POU4F2 and POU4F3. Regulates dorsal root ganglion sensory neuron specification and axonal projection into the spinal cord. Plays a role in TNFSF11-mediated terminal osteoclast differentiation. Negatively regulates its own expression interacting directly with a highly conserved autoregulatory domain surrounding the transcription initiation site. Its function is as follows. Able to act as transcription factor, cannot regulate the expression of the same subset of genes than isoform 1. Does not have anitapoptotic effect on neuronal cells. This is POU domain, class 4, transcription factor 1 (Pou4f1) from Rattus norvegicus (Rat).